Reading from the N-terminus, the 262-residue chain is 1,2-epoxyphenylacetyl-CoA isomerase (262 aa).

The protein belongs to the enoyl-CoA hydratase/isomerase family.

It carries out the reaction 2-(1,2-epoxy-1,2-dihydrophenyl)acetyl-CoA = 2-oxepin-2(3H)-ylideneacetyl-CoA. It functions in the pathway aromatic compound metabolism; phenylacetate degradation. In terms of biological role, catalyzes the reversible conversion of the epoxide to 2-oxepin-2(3H)-ylideneacetyl-CoA (oxepin-CoA). In Escherichia coli (strain K12), this protein is 1,2-epoxyphenylacetyl-CoA isomerase (paaG).